We begin with the raw amino-acid sequence, 314 residues long: MNWLTNVVRPKIRNILKRETPENLWIKCPDTGQLVFYKDVESNQFVIPGSNYHMRMSADARLRSIFDNETWYDVALPEVTADPLKFRDERKYVDRIKDARTKTGLHDSVKVGFGKLEGAGVVVAVQDFDFMGGSLGMAAGEAIVRGLELAVEKQCPFIVFAASGGARMQEGVLSLMQLPRTTVAVQMLREAGQPYIVVLTNPTTGGVTASYAMLGDVQIAEPGALIGFAGARVIEQTIREKLPNGFQRAEYLRDHGMVDMVVHRHDLRPTLARLCRLLTKAPEIDAAPEPSPAAEEPAEPMPAPEAAAPSAPPA.

The CoA carboxyltransferase N-terminal domain maps to 24–293 (LWIKCPDTGQ…IDAAPEPSPA (270 aa)). Residues 283 to 314 (EIDAAPEPSPAAEEPAEPMPAPEAAAPSAPPA) form a disordered region. Low complexity-rich tracts occupy residues 284–295 (IDAAPEPSPAAE) and 304–314 (PEAAAPSAPPA).

Belongs to the AccD/PCCB family. Acetyl-CoA carboxylase is a heterohexamer composed of biotin carboxyl carrier protein (AccB), biotin carboxylase (AccC) and two subunits each of ACCase subunit alpha (AccA) and ACCase subunit beta (AccD).

The protein localises to the cytoplasm. The enzyme catalyses N(6)-carboxybiotinyl-L-lysyl-[protein] + acetyl-CoA = N(6)-biotinyl-L-lysyl-[protein] + malonyl-CoA. The protein operates within lipid metabolism; malonyl-CoA biosynthesis; malonyl-CoA from acetyl-CoA: step 1/1. Component of the acetyl coenzyme A carboxylase (ACC) complex. Biotin carboxylase (BC) catalyzes the carboxylation of biotin on its carrier protein (BCCP) and then the CO(2) group is transferred by the transcarboxylase to acetyl-CoA to form malonyl-CoA. The sequence is that of Acetyl-coenzyme A carboxylase carboxyl transferase subunit beta from Nitrobacter hamburgensis (strain DSM 10229 / NCIMB 13809 / X14).